Reading from the N-terminus, the 698-residue chain is RNA cytosine-C(5)-methyltransferase NSUN2 (698 aa).

Over residues 1–10 the composition is skewed to basic residues; sequence MGRKNRRNRQ. The segment at 1–28 is disordered; sequence MGRKNRRNRQRRTEQRSPAEEERRKARE. The span at 11 to 28 shows a compositional bias: basic and acidic residues; it reads RRTEQRSPAEEERRKARE. S-adenosyl-L-methionine-binding positions include 182–188, D213, D240, and D266; that span reads CAAPGSK. C319 functions as the Nucleophile in the catalytic mechanism. Residues 472–496 are disordered; it reads AVDAENGETKPCTNQSGSSKTDSVC. The segment covering 482–493 has biased composition (polar residues); sequence PCTNQSGSSKTD.

The protein belongs to the class I-like SAM-binding methyltransferase superfamily. RsmB/NOP family. TRM4 subfamily.

The protein resides in the nucleus. Its subcellular location is the nucleolus. It is found in the cytoplasm. It localises to the mitochondrion. The protein localises to the cytoskeleton. The protein resides in the spindle. Its subcellular location is the secreted. It is found in the extracellular exosome. The enzyme catalyses cytidine(48) in tRNA + S-adenosyl-L-methionine = 5-methylcytidine(48) in tRNA + S-adenosyl-L-homocysteine + H(+). It catalyses the reaction cytidine(49) in tRNA + S-adenosyl-L-methionine = 5-methylcytidine(49) in tRNA + S-adenosyl-L-homocysteine + H(+). The catalysed reaction is cytidine(50) in tRNA + S-adenosyl-L-methionine = 5-methylcytidine(50) in tRNA + S-adenosyl-L-homocysteine + H(+). It carries out the reaction cytidine(34) in tRNA precursor + S-adenosyl-L-methionine = 5-methylcytidine(34) in tRNA precursor + S-adenosyl-L-homocysteine + H(+). The enzyme catalyses a cytidine in mRNA + S-adenosyl-L-methionine = a 5-methylcytidine in mRNA + S-adenosyl-L-homocysteine + H(+). RNA cytosine C(5)-methyltransferase that methylates cytosine to 5-methylcytosine (m5C) in various RNAs, such as tRNAs, mRNAs and some long non-coding RNAs (lncRNAs). Involved in various processes, such as epidermal stem cell differentiation, testis differentiation and maternal to zygotic transition during early development: acts by increasing protein synthesis; cytosine C(5)-methylation promoting tRNA stability and preventing mRNA decay. Methylates cytosine to 5-methylcytosine (m5C) at positions 34 and 48 of intron-containing tRNA(Leu)(CAA) precursors, and at positions 48, 49 and 50 of tRNA(Gly)(GCC) precursors. tRNA methylation is required generation of RNA fragments derived from tRNAs (tRFs). Also mediates C(5)-methylation of mitochondrial tRNAs. Catalyzes cytosine C(5)-methylation of mRNAs, leading to stabilize them and prevent mRNA decay. Cytosine C(5)-methylation of mRNAs also regulates mRNA export. Also mediates cytosine C(5)-methylation of non-coding RNAs, such as vault RNAs (vtRNAs), promoting their processing into regulatory small RNAs. Required for proper spindle assembly and chromosome segregation, independently of its methyltransferase activity. The chain is RNA cytosine-C(5)-methyltransferase NSUN2 from Xenopus laevis (African clawed frog).